Consider the following 190-residue polypeptide: Protein PLANT CADMIUM RESISTANCE 10 (190 aa).

Transmembrane regions (helical) follow at residues 78 to 98 (LLGS…WALV) and 108 to 125 (GALL…ACGY).

The protein belongs to the cornifelin family.

The protein localises to the membrane. Its function is as follows. May be involved in cadmium resistance. In Arabidopsis thaliana (Mouse-ear cress), this protein is Protein PLANT CADMIUM RESISTANCE 10 (PCR10).